The chain runs to 625 residues: 1,4-alpha-glucan branching enzyme GlgB (625 aa).

Catalysis depends on aspartate 302, which acts as the Nucleophile. The Proton donor role is filled by glutamate 355.

It belongs to the glycosyl hydrolase 13 family. GlgB subfamily. As to quaternary structure, monomer.

The catalysed reaction is Transfers a segment of a (1-&gt;4)-alpha-D-glucan chain to a primary hydroxy group in a similar glucan chain.. It functions in the pathway glycan biosynthesis; glycogen biosynthesis. Its function is as follows. Catalyzes the formation of the alpha-1,6-glucosidic linkages in glycogen by scission of a 1,4-alpha-linked oligosaccharide from growing alpha-1,4-glucan chains and the subsequent attachment of the oligosaccharide to the alpha-1,6 position. This chain is 1,4-alpha-glucan branching enzyme GlgB, found in Albidiferax ferrireducens (strain ATCC BAA-621 / DSM 15236 / T118) (Rhodoferax ferrireducens).